The following is a 524-amino-acid chain: Cysteine--tRNA ligase (524 aa).

Cysteine 29 serves as a coordination point for Zn(2+). Positions 31-41 match the 'HIGH' region motif; sequence PTVQAAPHVGH. 3 residues coordinate Zn(2+): cysteine 207, histidine 232, and glutamate 236. A compositionally biased stretch (low complexity) spans 246-258; that stretch reads ARPASNAASADSP. The disordered stretch occupies residues 246-273; that stretch reads ARPASNAASADSPGPGGGEPGGGEPSSG. The segment covering 259 to 270 has biased composition (gly residues); the sequence is GPGGGEPGGGEP. Residues 291–295 carry the 'KMSKS' region motif; it reads KMSKS. Lysine 294 serves as a coordination point for ATP.

This sequence belongs to the class-I aminoacyl-tRNA synthetase family. As to quaternary structure, monomer. Zn(2+) serves as cofactor.

The protein resides in the cytoplasm. It carries out the reaction tRNA(Cys) + L-cysteine + ATP = L-cysteinyl-tRNA(Cys) + AMP + diphosphate. The protein is Cysteine--tRNA ligase of Frankia casuarinae (strain DSM 45818 / CECT 9043 / HFP020203 / CcI3).